Consider the following 219-residue polypeptide: MDREAFVQTLTACRLCPRLVAWREEVVGRKRAFRGEPYWARPVPGFGDPEARILLFGLAPGAHGSNRTGRPFTGDASGAFLYPLLHEAGLSSKPESLPGDDLRLYGVYLTAAVRCAPPKNKPTPEELRACARWTEVELGLLPEVRVYVALGRIALEALLAHFGLRKSAHPFRHGAHYPLPGGRHLLASYHVSRQNTQTGRLTREMFLEVLMEAKRLAGL.

C13, C16, C115, and C130 together coordinate [4Fe-4S] cluster.

The protein belongs to the uracil-DNA glycosylase (UDG) superfamily. Type 5 (UDGb) family.

DNA glycosylase with broad substrate specificity. Can remove uracil from double-stranded DNA containing either a U/G, U/A, U/C or U/T base pair. Can also excise hypoxanthine from double-stranded DNA containing G/I, T/I, and A/I base pairs, xanthine from both double-stranded and single stranded DNA, thymine from G/T mismatched DNA, 5'-hydroxymethyluracil and 5'-fluorouracil. The protein is Type-5 uracil-DNA glycosylase of Thermus thermophilus (strain ATCC 27634 / DSM 579 / HB8).